Reading from the N-terminus, the 67-residue chain is MMFRLTSVSCFLLVIACLNLFQVVLTSRCFPPGIYCTPYLPCCWGICCDTCRNVCHLRIGKRATFQE.

Positions 1–26 (MMFRLTSVSCFLLVIACLNLFQVVLT) are cleaved as a signal peptide. 4 disulfide bridges follow: Cys29–Cys43, Cys36–Cys48, Cys42–Cys51, and Cys47–Cys55. Ile59 carries the post-translational modification Isoleucine amide. Residues 63–67 (ATFQE) constitute a propeptide that is removed on maturation.

The protein belongs to the conotoxin I2 superfamily. Expressed by the venom duct.

It is found in the secreted. In terms of biological role, inhibits the vertebrate voltage-gated potassium channels Kv1.1/KCNA1 and Kv1.3/KCNA3. This Conus vexillum (Flag cone) protein is Kappa-conotoxin-like 1.